The following is a 149-amino-acid chain: Putative pre-16S rRNA nuclease (149 aa).

This sequence belongs to the YqgF nuclease family.

Its subcellular location is the cytoplasm. Could be a nuclease involved in processing of the 5'-end of pre-16S rRNA. The chain is Putative pre-16S rRNA nuclease from Pseudoalteromonas translucida (strain TAC 125).